Reading from the N-terminus, the 199-residue chain is Thymidylate kinase (199 aa).

7 to 14 contributes to the ATP binding site; the sequence is GIDGSGKS.

The protein belongs to the thymidylate kinase family.

It catalyses the reaction dTMP + ATP = dTDP + ADP. Its function is as follows. Phosphorylation of dTMP to form dTDP in both de novo and salvage pathways of dTTP synthesis. This chain is Thymidylate kinase, found in Neorickettsia sennetsu (strain ATCC VR-367 / Miyayama) (Ehrlichia sennetsu).